Consider the following 129-residue polypeptide: Small ribosomal subunit protein uS11 (129 aa).

This sequence belongs to the universal ribosomal protein uS11 family. Part of the 30S ribosomal subunit. Interacts with proteins S7 and S18. Binds to IF-3.

In terms of biological role, located on the platform of the 30S subunit, it bridges several disparate RNA helices of the 16S rRNA. Forms part of the Shine-Dalgarno cleft in the 70S ribosome. The sequence is that of Small ribosomal subunit protein uS11 from Synechococcus sp. (strain RCC307).